The following is a 344-amino-acid chain: Beta-1,4-galactosyltransferase 4 (344 aa).

The Cytoplasmic segment spans residues 1–12 (MGCNPPYLLPYR). A helical; Signal-anchor for type II membrane protein transmembrane segment spans residues 13–38 (LRLLLFFTLCLTVVGWVTSNYFVDPI). Residues 39 to 344 (QVIPKAKVFM…NITVDFWTGV (306 aa)) lie on the Lumenal side of the membrane. Cysteine 77 and cysteine 118 form a disulfide bridge. Residues 129-133 (PHRNR), 168-170 (FNR), and 195-196 (VD) each bind UDP-alpha-D-galactose. The cysteines at positions 189 and 208 are disulfide-linked. Aspartate 196 provides a ligand contact to Mn(2+). Asparagine 220 carries an N-linked (GlcNAc...) asparagine glycan. UDP-alpha-D-galactose is bound by residues tyrosine 224 and tryptophan 256. 258 to 261 (GEDD) serves as a coordination point for N-acetyl-D-glucosamine. Histidine 289 is a Mn(2+) binding site. 289-291 (HTR) provides a ligand contact to UDP-alpha-D-galactose. Arginine 301 is an N-acetyl-D-glucosamine binding site. A glycan (N-linked (GlcNAc...) asparagine) is linked at asparagine 335.

This sequence belongs to the glycosyltransferase 7 family. It depends on Mn(2+) as a cofactor.

Its subcellular location is the golgi apparatus. The protein resides in the golgi stack membrane. It catalyses the reaction N-acetyl-D-glucosamine + UDP-alpha-D-galactose = beta-D-galactosyl-(1-&gt;4)-N-acetyl-D-glucosamine + UDP + H(+). The catalysed reaction is a beta-D-GlcNAc-(1-&gt;3)-beta-D-Gal-(1-&gt;4)-beta-D-Glc-(1&lt;-&gt;1)-Cer(d18:1(4E)) + UDP-alpha-D-galactose = a neolactoside nLc4Cer(d18:1(4E)) + UDP + H(+). The protein operates within protein modification; protein glycosylation. Its function is as follows. Galactose (Gal) transferase involved in the biosynthesis of glycoproteins, proteoglycans, and glycosyphingolipids. Catalyzes the transfer of Gal residue via a beta1-&gt;4 linkage from UDP-Gal to the non-reducing terminal N-acetyl glucosamine 6-O-sulfate (6-O-sulfoGlcNAc) in the linearly growing chain of both N- and O-linked keratan sulfate proteoglycans. Cooperates with B3GNT7 N-acetyl glucosamine transferase and CHST6 and CHST1 sulfotransferases to construct and elongate mono- and disulfated disaccharide units [-&gt;3Galbeta1-&gt;4(6-sulfoGlcNAcbeta)1-&gt;] and [-&gt;3(6-sulfoGalbeta)1-&gt;4(6-sulfoGlcNAcbeta)1-&gt;] within keratan sulfate polymer. In Cricetulus griseus (Chinese hamster), this protein is Beta-1,4-galactosyltransferase 4 (B4GALT4).